The sequence spans 1472 residues: Adhesion G protein-coupled receptor L1 (1472 aa).

The signal sequence occupies residues Met1–Gly24. Topologically, residues Leu25–Leu857 are extracellular. The SUEL-type lectin domain occupies Ala40 to Val129. Cystine bridges form between Cys41–Cys71, Cys50–Cys128, Cys83–Cys115, Cys96–Cys102, and Cys140–Cys322. Glu42 contributes to the alpha-L-rhamnose binding site. Residue Asn98 is glycosylated (N-linked (GlcNAc...) asparagine). Residue Gly117–Lys120 participates in alpha-L-rhamnose binding. Residues Val139–Pro398 form the Olfactomedin-like domain. Positions Asp400–Pro468 are disordered. The segment covering Pro405–Thr441 has biased composition (low complexity). Pro residues predominate over residues Asp453–Pro468. 2 cysteine pairs are disulfide-bonded: Cys480–Cys515 and Cys503–Cys532. Asn531, Asn640, Asn741, Asn800, Asn805, and Asn826 each carry an N-linked (GlcNAc...) asparagine glycan. Residues Pro669–Tyr850 enclose the GAIN-B domain. Cystine bridges form between Cys801–Cys832 and Cys820–Cys834. The tract at residues Cys801–Tyr850 is GPS. Residues Leu858–Ile878 form a helical membrane-spanning segment. At Ser879–Asn892 the chain is on the cytoplasmic side. The chain crosses the membrane as a helical span at residues Thr893 to Ile913. Topologically, residues Asp914–Glu919 are extracellular. Residues Ile920–Leu940 form a helical membrane-spanning segment. At Cys941–Lys963 the chain is on the cytoplasmic side. Residues Tyr964–Asp984 traverse the membrane as a helical segment. Residues Tyr985–Tyr1001 lie on the Extracellular side of the membrane. Residues Phe1002–Met1022 form a helical membrane-spanning segment. The Cytoplasmic segment spans residues Val1023–Ala1049. The chain crosses the membrane as a helical span at residues Leu1050–Ile1070. The Extracellular segment spans residues Asn1071–Ser1074. The helical transmembrane segment at Val1075–Phe1095 threads the bilayer. Residues His1096 to Leu1472 lie on the Cytoplasmic side of the membrane. Arg1193 is subject to Omega-N-methylarginine. At Ser1219 the chain carries Phosphoserine. Disordered stretches follow at residues Phe1247–Arg1271, Asn1291–Gly1325, Glu1358–Pro1427, and Tyr1449–Leu1472. Pro residues-rich tracts occupy residues Gly1301–Pro1313 and Ala1406–Pro1418. Position 1471 is a phosphoserine (Ser1471).

This sequence belongs to the G-protein coupled receptor 2 family. Adhesion G-protein coupled receptor (ADGR) subfamily. In terms of assembly, forms a heterodimer, consisting of a large extracellular region (p120) non-covalently linked to a seven-transmembrane moiety (p85). Interacts with syntaxin and with proteins of the SHANK family via the PDZ domain. Interacts (via extracellular domain) with FLRT1, FLRT2 and FLRT3 (via extracellular domain). Autoproteolytically cleaved into 2 subunits, an extracellular subunit and a seven-transmembrane subunit. This proteolytic processing takes place early in the biosynthetic pathway, either in the endoplasmic reticulum or in the early compartment of the Golgi apparatus. In terms of tissue distribution, brain-specific expression but low levels are also detected in kidney, lung and spleen.

The protein localises to the cell membrane. The protein resides in the cell projection. It localises to the axon. It is found in the growth cone. Its subcellular location is the synapse. The protein localises to the presynaptic cell membrane. The protein resides in the synaptosome. In terms of biological role, calcium-independent receptor of high affinity for alpha-latrotoxin, an excitatory neurotoxin present in black widow spider venom which triggers massive exocytosis from neurons and neuroendocrine cells. Receptor for TENM2 that mediates heterophilic synaptic cell-cell contact and postsynaptic specialization. Receptor probably implicated in the regulation of exocytosis. In Bos taurus (Bovine), this protein is Adhesion G protein-coupled receptor L1.